The primary structure comprises 465 residues: tRNA-2-methylthio-N(6)-dimethylallyladenosine synthase (465 aa).

Residues 26 to 141 (MRAHIITYGC…LPEALKANER (116 aa)) form the MTTase N-terminal domain. 6 residues coordinate [4Fe-4S] cluster: C35, C71, C104, C173, C177, and C180. The region spanning 159–388 (PKGALSAHVT…IEKQKEWSYR (230 aa)) is the Radical SAM core domain. Positions 391 to 453 (LEWVGKTVEV…PHLLFGEVVG (63 aa)) constitute a TRAM domain.

This sequence belongs to the methylthiotransferase family. MiaB subfamily. In terms of assembly, monomer. [4Fe-4S] cluster is required as a cofactor.

Its subcellular location is the cytoplasm. It catalyses the reaction N(6)-dimethylallyladenosine(37) in tRNA + (sulfur carrier)-SH + AH2 + 2 S-adenosyl-L-methionine = 2-methylsulfanyl-N(6)-dimethylallyladenosine(37) in tRNA + (sulfur carrier)-H + 5'-deoxyadenosine + L-methionine + A + S-adenosyl-L-homocysteine + 2 H(+). Functionally, catalyzes the methylthiolation of N6-(dimethylallyl)adenosine (i(6)A), leading to the formation of 2-methylthio-N6-(dimethylallyl)adenosine (ms(2)i(6)A) at position 37 in tRNAs that read codons beginning with uridine. This is tRNA-2-methylthio-N(6)-dimethylallyladenosine synthase from Thermus thermophilus (strain ATCC BAA-163 / DSM 7039 / HB27).